We begin with the raw amino-acid sequence, 229 residues long: Prolactin (229 aa).

Residues 1–30 (MDSKVSSQKGSRLLLLLVVSNLLLCQGVVS) form the signal peptide. A disulfide bridge links Cys-34 with Cys-41. 3 positions are modified to phosphoserine: Ser-56, Ser-64, and Ser-120. Cystine bridges form between Cys-88–Cys-204 and Cys-221–Cys-229.

It belongs to the somatotropin/prolactin family. In terms of assembly, interacts with PRLR.

Its subcellular location is the secreted. Prolactin acts primarily on the mammary gland by promoting lactation. The sequence is that of Prolactin (PRL) from Cervus elaphus (Red deer).